Consider the following 424-residue polypeptide: Kynureninase (424 aa).

Pyridoxal 5'-phosphate is bound by residues leucine 106, threonine 107, 134–137 (FPSD), aspartate 219, histidine 222, and tyrosine 244. Lysine 245 is subject to N6-(pyridoxal phosphate)lysine. Pyridoxal 5'-phosphate-binding residues include tryptophan 274 and asparagine 302.

This sequence belongs to the kynureninase family. In terms of assembly, homodimer. It depends on pyridoxal 5'-phosphate as a cofactor.

It carries out the reaction L-kynurenine + H2O = anthranilate + L-alanine + H(+). The enzyme catalyses 3-hydroxy-L-kynurenine + H2O = 3-hydroxyanthranilate + L-alanine + H(+). Its pathway is amino-acid degradation; L-kynurenine degradation; L-alanine and anthranilate from L-kynurenine: step 1/1. The protein operates within cofactor biosynthesis; NAD(+) biosynthesis; quinolinate from L-kynurenine: step 2/3. Catalyzes the cleavage of L-kynurenine (L-Kyn) and L-3-hydroxykynurenine (L-3OHKyn) into anthranilic acid (AA) and 3-hydroxyanthranilic acid (3-OHAA), respectively. In Xanthomonas campestris pv. campestris (strain 8004), this protein is Kynureninase.